Reading from the N-terminus, the 161-residue chain is Type-1 angiotensin II receptor-associated protein (161 aa).

At 1–26 (MELPAVNLKVILLVHWLLTTWGCLVF) the chain is on the extracellular side. A helical transmembrane segment spans residues 27-47 (SSSYAWGNFTILALGVWAVAQ). Residues 48–53 (RDSIDA) are Cytoplasmic-facing. The chain crosses the membrane as a helical span at residues 54 to 74 (IGMFLGGLVATIFLDIIYISI). Residues 75–86 (FYSSVATGDTGR) lie on the Extracellular side of the membrane. The helical transmembrane segment at 87–107 (FGAGMAILSLLLKPFSCCLVY) threads the bilayer. Topologically, residues 108 to 161 (HMHRERGGELPLRPDFFGPSQEHSAYQTIDSSSDAAADPFASLENKGQAVPRGY) are cytoplasmic. The interval 110–122 (HRERGGELPLRPD) is interaction with AGTR1. Residue Ser127 is modified to Phosphoserine. Residue Thr135 is modified to Phosphothreonine. A Phosphoserine modification is found at Ser138.

As to quaternary structure, interacts with RACK1, and with the C-terminal region of AGTR1. As to expression, ubiquitous but more abundant in kidney, testis and heart.

The protein resides in the endoplasmic reticulum membrane. The protein localises to the golgi apparatus membrane. Its subcellular location is the cytoplasmic vesicle membrane. Functionally, appears to be a negative regulator of type-1 angiotensin II receptor-mediated signaling by regulating receptor internalization as well as mechanism of receptor desensitization such as phosphorylation. Also induces a decrease in angiotensin II-stimulated transcriptional activity. May play a role of negative regulator in cardiomyocyte hypertrophy induced by angiotensin II through an inhibition of p38 mitogen-activated protein kinase pathway. The protein is Type-1 angiotensin II receptor-associated protein (Agtrap) of Mus musculus (Mouse).